The sequence spans 236 residues: 2-C-methyl-D-erythritol 4-phosphate cytidylyltransferase (236 aa).

Belongs to the IspD/TarI cytidylyltransferase family. IspD subfamily. As to quaternary structure, homodimer.

The enzyme catalyses 2-C-methyl-D-erythritol 4-phosphate + CTP + H(+) = 4-CDP-2-C-methyl-D-erythritol + diphosphate. Its pathway is isoprenoid biosynthesis; isopentenyl diphosphate biosynthesis via DXP pathway; isopentenyl diphosphate from 1-deoxy-D-xylulose 5-phosphate: step 2/6. Catalyzes the formation of 4-diphosphocytidyl-2-C-methyl-D-erythritol from CTP and 2-C-methyl-D-erythritol 4-phosphate (MEP). The polypeptide is 2-C-methyl-D-erythritol 4-phosphate cytidylyltransferase (Shigella flexneri serotype 5b (strain 8401)).